Consider the following 629-residue polypeptide: Ionotropic receptor 75a (629 aa).

The Extracellular segment spans residues 1–335 (MQLVQLANFV…GDVFLQPFSP (335 aa)). Residues asparagine 61, asparagine 112, asparagine 126, asparagine 144, asparagine 166, and asparagine 232 are each glycosylated (N-linked (GlcNAc...) asparagine). A helical membrane pass occupies residues 336 to 356 (LVWYLFGGVLSLIGVLLWITF). Residues 357–374 (YMECKRMQKRWRLDYLPS) lie on the Cytoplasmic side of the membrane. Residues 375-395 (LLSTFLISFGAACIQSSSLIP) traverse the membrane as a helical segment. Residues 396–402 (RSAGGRL) lie on the Extracellular side of the membrane. A helical transmembrane segment spans residues 403–423 (IYFALFLISFIMYNYYTSVVV). At 424–592 (SSLLSSPVKS…NFVITVGMEY (169 aa)) the chain is on the cytoplasmic side. A helical membrane pass occupies residues 593–613 (VAPLLLMLICADILVVVILLV). The Extracellular portion of the chain corresponds to 614–629 (ELAWKRFFTRPLTIHP).

The protein belongs to the glutamate-gated ion channel (TC 1.A.10.1) family. As to expression, expressed in neurons in the antennal coeloconic 2 (ac2) sensillum class of sensory hairs (at protein level).

It is found in the cell membrane. Its subcellular location is the cell projection. The protein resides in the dendrite. Functionally, olfactory receptor for propionic, butyric and 2-oxopentanoic acids. In Drosophila sechellia (Fruit fly), this protein is Ionotropic receptor 75a.